Consider the following 143-residue polypeptide: MSNDFKVIINGQNIDNGQKIIFEKSQDVPKPIFDIGDNEYYTIAMVDPDAPSRENPIYKYFLHMLIVNNYQTLVSFQPPSPPKGSGYHRYFFFLLKQPKYIDQNIWKQQINNNSIRREKFNLSEFISDNKLTVIASTYFKTKR.

Belongs to the phosphatidylethanolamine-binding protein family.

Its subcellular location is the virion. The chain is Phosphatidylethanolamine-binding protein homolog R644 from Acanthamoeba polyphaga mimivirus (APMV).